The sequence spans 145 residues: 3-hydroxyacyl-[acyl-carrier-protein] dehydratase FabZ (145 aa).

Histidine 47 is an active-site residue.

The protein belongs to the thioester dehydratase family. FabZ subfamily.

It is found in the cytoplasm. The catalysed reaction is a (3R)-hydroxyacyl-[ACP] = a (2E)-enoyl-[ACP] + H2O. Functionally, involved in unsaturated fatty acids biosynthesis. Catalyzes the dehydration of short chain beta-hydroxyacyl-ACPs and long chain saturated and unsaturated beta-hydroxyacyl-ACPs. This chain is 3-hydroxyacyl-[acyl-carrier-protein] dehydratase FabZ, found in Polaromonas sp. (strain JS666 / ATCC BAA-500).